A 182-amino-acid polypeptide reads, in one-letter code: Segregation and condensation protein B (182 aa).

Belongs to the ScpB family. In terms of assembly, homodimer. Homodimerization may be required to stabilize the binding of ScpA to the Smc head domains. Component of a cohesin-like complex composed of ScpA, ScpB and the Smc homodimer, in which ScpA and ScpB bind to the head domain of Smc. The presence of the three proteins is required for the association of the complex with DNA.

Its subcellular location is the cytoplasm. In terms of biological role, participates in chromosomal partition during cell division. May act via the formation of a condensin-like complex containing Smc and ScpA that pull DNA away from mid-cell into both cell halves. This Staphylococcus saprophyticus subsp. saprophyticus (strain ATCC 15305 / DSM 20229 / NCIMB 8711 / NCTC 7292 / S-41) protein is Segregation and condensation protein B.